The following is a 315-amino-acid chain: Lipase 3 (315 aa).

An N-terminal signal peptide occupies residues 1–18; that stretch reads MLLKRLGLAALFSLSMVG. Cys-19 is lipidated: N-palmitoyl cysteine. Cys-19 carries S-diacylglycerol cysteine lipidation. Positions 69-296 constitute an AB hydrolase-1 domain; the sequence is PLLLIHGFGG…MNDVGHVPMV (228 aa). His-74 is an active-site residue. The active-site Charge relay system is the Ser-142.

It belongs to the lipase/esterase LIP3/BchO family.

It localises to the cell membrane. It carries out the reaction a triacylglycerol + H2O = a diacylglycerol + a fatty acid + H(+). The sequence is that of Lipase 3 (lip3) from Moraxella sp. (strain TA144).